The sequence spans 290 residues: Probable endonuclease 4 (290 aa).

Zn(2+) contacts are provided by histidine 66, histidine 106, glutamate 143, aspartate 179, histidine 182, histidine 216, aspartate 229, histidine 231, and glutamate 261.

It belongs to the AP endonuclease 2 family. Zn(2+) is required as a cofactor.

It carries out the reaction Endonucleolytic cleavage to 5'-phosphooligonucleotide end-products.. Functionally, endonuclease IV plays a role in DNA repair. It cleaves phosphodiester bonds at apurinic or apyrimidinic (AP) sites, generating a 3'-hydroxyl group and a 5'-terminal sugar phosphate. This Solibacter usitatus (strain Ellin6076) protein is Probable endonuclease 4.